The following is a 146-amino-acid chain: Snake venom vascular endothelial growth factor toxin TfsvVEGF (146 aa).

The first 24 residues, 1-24, serve as a signal peptide directing secretion; it reads MAAYLLAVAILFCIQGWPSGTVQG. Glutamine 25 carries the pyrrolidone carboxylic acid modification. Intrachain disulfides connect cysteine 38-cysteine 80, cysteine 69-cysteine 115, and cysteine 73-cysteine 117. Residues 118–139 are compositionally biased toward basic and acidic residues; it reads RPRSPGDVNNGKDKRNPEEGGP. A disordered region spans residues 118 to 146; that stretch reads RPRSPGDVNNGKDKRNPEEGGPRARFPFV.

The protein belongs to the PDGF/VEGF growth factor family. Snake venom VEGF subfamily. In terms of assembly, homodimer; disulfide-linked. Interacts with VEGF receptor-1 (FLT1) with a high affinity, whereas it binds to VEGF receptor-2 (KDR) with a low affinity. Does not bind VEGF receptor-3 (FLT4). Expressed by the venom gland.

Its subcellular location is the secreted. Snake venom VEGFs may contribute to venom dispersion and prey subjugation by inducing vascular permeability and hypotension. This protein strongly increases vascular permeability, and weakly stimulates angiogenesis. Interacts with VEGF receptor-1 (FLT1) with a high affinity, whereas it binds to VEGF receptor-2 (KDR) with a low affinity. Stimulates autophosphorylation of VEGF receptor-1 (VEGFR-1/FLT1), and VEGF receptor-2 (VEGFR-2/KDR). The protein is Snake venom vascular endothelial growth factor toxin TfsvVEGF of Protobothrops flavoviridis (Habu).